Consider the following 606-residue polypeptide: ATP-dependent RNA helicase DBP6 (606 aa).

Disordered stretches follow at residues 1 to 88 (MFSQ…PEVD) and 101 to 124 (KFKQSTESETIEQDKEEDGEEDAN). 3 stretches are compositionally biased toward acidic residues: residues 35–71 (DESSDEEEEEEETDESEHESSQDEDINEEEPEEEDED), 78–88 (NMEIDSQPEVD), and 109–124 (ETIEQDKEEDGEEDAN). Residues 169 to 197 (KAFTDFKSSSFMIKNLEKMGFTEAFSVQI) carry the Q motif motif. In terms of domain architecture, Helicase ATP-binding spans 211–393 (KLKPDRVGDI…SLKFYNPRLI (183 aa)). ATP is bound at residue 224 to 231 (ASTGSGKT). The DEAD box signature appears at 331-334 (DEAD). The Helicase C-terminal domain maps to 430–585 (ILTKFLISTN…NVDLNVKELI (156 aa)).

It belongs to the DEAD box helicase family. DDX51/DBP6 subfamily. In terms of assembly, associated with pre-ribosomal particles.

The protein localises to the nucleus. It is found in the nucleolus. The enzyme catalyses ATP + H2O = ADP + phosphate + H(+). In terms of biological role, ATP-binding RNA helicase involved in the biogenesis of 60S ribosomal subunits and is required for the normal formation of 25S and 5.8S rRNAs. The protein is ATP-dependent RNA helicase DBP6 (DBP6) of Candida albicans (strain SC5314 / ATCC MYA-2876) (Yeast).